A 181-amino-acid chain; its full sequence is Inner membrane-spanning protein YciB (181 aa).

Helical transmembrane passes span 24–44 (SATA…WLRH), 49–69 (NMLW…LILQ), 81–101 (LYWL…KNLI), 119–139 (LNIS…YVAY), and 149–169 (FKLF…ALLL).

It belongs to the YciB family.

The protein localises to the cell inner membrane. Functionally, plays a role in cell envelope biogenesis, maintenance of cell envelope integrity and membrane homeostasis. The chain is Inner membrane-spanning protein YciB from Nitrosomonas eutropha (strain DSM 101675 / C91 / Nm57).